Reading from the N-terminus, the 266-residue chain is Probable septum site-determining protein MinC (266 aa).

Residues 1-21 show a composition bias toward low complexity; the sequence is MSEAESTPVEEPVVESTEGSE. Residues 1 to 28 are disordered; it reads MSEAESTPVEEPVVESTEGSEAIPEVEQ.

The protein belongs to the MinC family. Interacts with MinD and FtsZ.

Cell division inhibitor that blocks the formation of polar Z ring septums. Rapidly oscillates between the poles of the cell to destabilize FtsZ filaments that have formed before they mature into polar Z rings. Prevents FtsZ polymerization. The polypeptide is Probable septum site-determining protein MinC (Thermosynechococcus vestitus (strain NIES-2133 / IAM M-273 / BP-1)).